Here is a 668-residue protein sequence, read N- to C-terminus: Echinocandin B biosynthetic cluster protein J (668 aa).

Disordered regions lie at residues 1–20 (MHFA…DQSL), 92–113 (YTPP…PPTP), 224–322 (PLDH…QSAD), 330–349 (EVAE…SIPT), and 483–506 (NCSS…PPLK). Positions 96-106 (SLDSRSSATPP) are enriched in polar residues. Pro residues predominate over residues 264–275 (NPEPGTPTPPSP). The span at 311 to 322 (YRSTPSPCQSAD) shows a compositional bias: polar residues. Low complexity predominate over residues 484 to 494 (CSSSSCSSSAS). The segment covering 495 to 505 (KKNEEKREPPL) has biased composition (basic and acidic residues).

It functions in the pathway antifungal biosynthesis. Its function is as follows. Part of the gene cluster that mediates the biosynthesis of echinocandin B, a fungal lipidated cyclic hexapeptide that acts as an antifungal agent. Linoleoyl-AMP, produced by the fatty-acyl-AMP ligase ecdI, is transferred to the initiation carrier domain (T0) of ecdA. The linoleoyl-S-phosphopantetheinyl-T0 is sequentially extended with L-ornithine, L-threonine, L-proline, L-homotyrosine, L-threonine, and 4R-methyl-L-proline to form the linear hexapeptide. Thereafter, the terminal condensation (C7) performs macrocyclization of the NRPS product and the cyclic scaffold is released from ecdA. All six of the amino acid residues are hydroxylated, including 4R,5R-dihydroxy-L-ornithine, 4R-hydroxyl-L-proline, 3S,4S-dihydroxy-L-homotyrosine, and 3S-hydroxyl-4S-methyl-L-prolin. In the pathway, all the hydroxylation reactions are proposed to occur following completion of the cyclic peptide, so the unhydroxylated precursor produced by ecdA will undergo six rounds of hydroxylation. Five hydroxylase genes (ecdG, ecdH, ecdK, htyE and htyF) are embedded within the echinocandin B (ecd) and L-homotyrosine (hty) clusters. This chain is Echinocandin B biosynthetic cluster protein J, found in Aspergillus rugulosus (Emericella rugulosa).